Here is a 533-residue protein sequence, read N- to C-terminus: Solute carrier family 2, facilitated glucose transporter member 2 (533 aa).

Residues 1 to 17 (MDGKSKMQAEKHLTGTL) lie on the Cytoplasmic side of the membrane. Residues 18–38 (VLSVFTAVLGFFQYGYSLGVI) form a helical membrane-spanning segment. The Extracellular segment spans residues 39-110 (NAPQKVIEAH…SPHILTMYWS (72 aa)). Residues Asn-64 and Asn-69 are each glycosylated (N-linked (GlcNAc...) asparagine). Residues 111 to 131 (LSVSMFAVGGMVSSFTVGWIG) traverse the membrane as a helical segment. Residues 132-136 (DRLGR) are Cytoplasmic-facing. The helical transmembrane segment at 137–157 (VKAMLVVNVLSIAGNLLMGLA) threads the bilayer. Over 158–163 (KMGPSH) the chain is Extracellular. Residues 164–184 (ILIIAGRAITGLYCGLSSGLV) traverse the membrane as a helical segment. Residues 185–199 (PMYVSEVSPTALRGA) are Cytoplasmic-facing. The helical transmembrane segment at 200-220 (LGTLHQLAIVTGILISQVLGL) threads the bilayer. D-glucose is bound at residue Gln-205. The Extracellular segment spans residues 221-229 (DFLLGNDEL). The helical transmembrane segment at 230–250 (WPLLLGLSGVAALLQFFLLLL) threads the bilayer. Over 251–315 (CPESPRYLYI…LFSSSKYRQA (65 aa)) the chain is Cytoplasmic. The helical transmembrane segment at 316-336 (VIVALMVQISQQFSGINAIFY) threads the bilayer. Residues 326–327 (QQ) and Asn-332 contribute to the D-glucose site. At 337–350 (YSTNIFQRAGVGQP) the chain is on the extracellular side. The chain crosses the membrane as a helical span at residues 351–371 (VYATIGVGVVNTVFTVISVFL). Asn-361 provides a ligand contact to D-glucose. The Cytoplasmic segment spans residues 372-379 (VEKAGRRS). Residues 380–400 (LFLAGLMGMLISAVAMTVGLV) form a helical membrane-spanning segment. Residues 401–413 (LLSQFAWMSYVSM) are Extracellular-facing. Residues 414-434 (VAIFLFVIFFEVGPGPIPWFI) traverse the membrane as a helical segment. Residues Glu-424 and Trp-432 each contribute to the D-glucose site. The Cytoplasmic segment spans residues 435-445 (VAELFSQGPRP). The helical transmembrane segment at 446–466 (AAIAVAGFCNWACNFIVGMCF) threads the bilayer. The Extracellular segment spans residues 467–471 (QYIAD). Residues 472–492 (LCGPYVFVVFAVLLLVFFLFA) traverse the membrane as a helical segment. Residues 493-533 (YLKVPETKGKSFEEIAAAFRRKKLPAKSMTELEDLRGGEEA) are Cytoplasmic-facing.

This sequence belongs to the major facilitator superfamily. Sugar transporter (TC 2.A.1.1) family. Glucose transporter subfamily.

It localises to the cell membrane. It carries out the reaction D-glucose(out) = D-glucose(in). It catalyses the reaction D-fructose(out) = D-fructose(in). The enzyme catalyses L-dehydroascorbate(out) = L-dehydroascorbate(in). The catalysed reaction is D-galactose(in) = D-galactose(out). Its activity is regulated as follows. D-glucose and maltose competitively inhibit fructose transport. D-glucose, D-fructose and maltose inhibit deoxyglucose transport. Its function is as follows. Facilitative hexose transporter that mediates the transport of glucose, fructose and galactose. Likely mediates the bidirectional transfer of glucose across the plasma membrane of hepatocytes and is responsible for uptake of glucose by the beta cells. The protein is Solute carrier family 2, facilitated glucose transporter member 2 of Gallus gallus (Chicken).